A 115-amino-acid polypeptide reads, in one-letter code: Non-specific lipid-transfer protein 4.3 (115 aa).

Residues 1-25 form the signal peptide; the sequence is MARAAATQLVLVAMVAAMLLVATDA. 4 cysteine pairs are disulfide-bonded: Cys29–Cys77, Cys39–Cys54, Cys55–Cys97, and Cys75–Cys111.

The protein belongs to the plant LTP family.

Functionally, plant non-specific lipid-transfer proteins transfer phospholipids as well as galactolipids across membranes. May play a role in wax or cutin deposition in the cell walls of expanding epidermal cells and certain secretory tissues. This chain is Non-specific lipid-transfer protein 4.3 (LTP4.3), found in Hordeum vulgare (Barley).